The sequence spans 696 residues: uncharacterized protein (696 aa).

10 helical membrane-spanning segments follow: residues 38 to 58 (IISI…NALA), 107 to 127 (LIYV…GYVV), 215 to 235 (AMAS…IFAL), 245 to 265 (SLFT…VVAL), 292 to 312 (TLPF…LIYL), 329 to 349 (VFFV…ILGE), 380 to 400 (FWVT…LTSA), 402 to 422 (FGAA…ACIG), 433 to 453 (FPSL…FLSS), and 457 to 477 (LVVA…IALP). 2 consecutive CBS domains span residues 527-587 (RSPE…PMSS) and 617-674 (IHPT…THTG).

This sequence belongs to the chloride channel (TC 2.A.49) family.

The protein localises to the membrane. Voltage-gated chloride channel. This is an uncharacterized protein from Schizosaccharomyces pombe (strain 972 / ATCC 24843) (Fission yeast).